Reading from the N-terminus, the 432-residue chain is Trigger factor (432 aa).

A PPIase FKBP-type domain is found at 161-246; that stretch reads GTRATINFVG…VVKVESRELP (86 aa).

The protein belongs to the FKBP-type PPIase family. Tig subfamily.

It localises to the cytoplasm. It catalyses the reaction [protein]-peptidylproline (omega=180) = [protein]-peptidylproline (omega=0). Its function is as follows. Involved in protein export. Acts as a chaperone by maintaining the newly synthesized protein in an open conformation. Functions as a peptidyl-prolyl cis-trans isomerase. This chain is Trigger factor, found in Aliivibrio fischeri (strain ATCC 700601 / ES114) (Vibrio fischeri).